Reading from the N-terminus, the 203-residue chain is Xrcc4-like factor 1 (203 aa).

This sequence belongs to the XRCC4-XLF family. XLF subfamily.

The protein localises to the nucleus. In terms of biological role, involved in double-strand break repair via non-homologous end joining (NHEJ); the repair of a double-strand break in DNA in which the two broken ends are rejoined with little or no sequence complementarity. Has a role in meiosis. This Schizosaccharomyces pombe (strain 972 / ATCC 24843) (Fission yeast) protein is Xrcc4-like factor 1 (xlf1).